The chain runs to 274 residues: Kit ligand (274 aa).

Residues 1-25 (MKKTQTWIITCIYLQLLLFNPLVHT) form the signal peptide. Gln-26 bears the Pyrrolidone carboxylic acid mark. Residues 26 to 215 (QGICSNRVTD…SNSIEDSSLQ (190 aa)) lie on the Extracellular side of the membrane. 2 disulfides stabilise this stretch: Cys-29/Cys-114 and Cys-68/Cys-164. 3 N-linked (GlcNAc...) asparagine glycosylation sites follow: Asn-90, Asn-145, and Asn-196. Residues 216–238 (WAAVALPAFFSLVIGFAFGAFYW) traverse the membrane as a helical segment. The Cytoplasmic portion of the chain corresponds to 239 to 274 (KKKQPNLTRTVENRQINEEDNEISMLQEKEREFQEV).

The protein belongs to the SCF family. Homodimer, non-covalently linked. A soluble form is produced by proteolytic processing of isoform 1 in the extracellular domain.

The protein resides in the cell membrane. The protein localises to the cytoplasm. Its subcellular location is the cytoskeleton. It is found in the cell projection. It localises to the lamellipodium. The protein resides in the filopodium. The protein localises to the secreted. In terms of biological role, stimulates the proliferation of mast cells. Able to augment the proliferation of both myeloid and lymphoid hematopoietic progenitors in bone marrow culture. Also mediates cell-cell adhesion. Acts synergistically with other cytokines, probably interleukins. This Bos taurus (Bovine) protein is Kit ligand (KITLG).